The following is a 390-amino-acid chain: Zinc transporter 8 (390 aa).

A signal peptide spans 1 to 25 (MRTNTTATVLLAAAVALLLATAARG). The N-linked (GlcNAc...) asparagine glycan is linked to Asn4. Over 26–50 (DGGDGGCGKEDAAAGRDRARARGLK) the chain is Extracellular. A helical membrane pass occupies residues 51 to 71 (IAAFFSILVCGALGCGLPSLG). Topologically, residues 72-82 (RHVPALRPDGD) are cytoplasmic. A helical membrane pass occupies residues 83–103 (VFFLVKAFAAGVILATGFIHI). The Extracellular segment spans residues 104–124 (LPDAFDNLTDDCLPAGGPWKE). An N-linked (GlcNAc...) asparagine glycan is attached at Asn110. Residues 125–145 (FPFAGFGAMVGAIGTLVVDTL) traverse the membrane as a helical segment. Residues 146–235 (ATGYFTRALS…DDKETTLRHR (90 aa)) are Cytoplasmic-facing. Positions 165 to 199 (VADEEKQSAAATQQHNHHHNHHVVGDGGGGGEEHE) are disordered. A helical membrane pass occupies residues 236 to 256 (VISQVLELGIVVHSVIIGISL). At 257 to 267 (GASQNPETIKP) the chain is on the extracellular side. The chain crosses the membrane as a helical span at residues 268–288 (LVVALSFHQMFEGMGLGGCIV). At 289-296 (QAKFKVRS) the chain is on the cytoplasmic side. A helical transmembrane segment spans residues 297–317 (IVTMVLFFCLTTPVGIAVGVG). Residues 318–329 (ISSVYNESSPTA) lie on the Extracellular side of the membrane. Asn323 carries N-linked (GlcNAc...) asparagine glycosylation. The chain crosses the membrane as a helical span at residues 330–350 (LVVEGILNSVAAGILIYMALV). Residues 351 to 369 (DLLAEDFMNPRVQSKGKLQ) lie on the Cytoplasmic side of the membrane. A helical membrane pass occupies residues 370–390 (LGINLAMLAGAGLMSMLAKWA).

The protein belongs to the ZIP transporter (TC 2.A.5) family.

It is found in the cell membrane. Its function is as follows. Zinc transporter that may mediate zinc uptake from the rhizosphere and may be responsible for the translocation of zinc within the plant. This Oryza sativa subsp. japonica (Rice) protein is Zinc transporter 8 (ZIP8).